Consider the following 256-residue polypeptide: Acetyl-coenzyme A carboxylase carboxyl transferase subunit alpha (256 aa).

In terms of domain architecture, CoA carboxyltransferase C-terminal spans 1-236; it reads MSDVARILKE…KTAIVDELAE (236 aa).

The protein belongs to the AccA family. As to quaternary structure, acetyl-CoA carboxylase is a heterohexamer composed of biotin carboxyl carrier protein (AccB), biotin carboxylase (AccC) and two subunits each of ACCase subunit alpha (AccA) and ACCase subunit beta (AccD).

It localises to the cytoplasm. The catalysed reaction is N(6)-carboxybiotinyl-L-lysyl-[protein] + acetyl-CoA = N(6)-biotinyl-L-lysyl-[protein] + malonyl-CoA. The protein operates within lipid metabolism; malonyl-CoA biosynthesis; malonyl-CoA from acetyl-CoA: step 1/1. Its function is as follows. Component of the acetyl coenzyme A carboxylase (ACC) complex. First, biotin carboxylase catalyzes the carboxylation of biotin on its carrier protein (BCCP) and then the CO(2) group is transferred by the carboxyltransferase to acetyl-CoA to form malonyl-CoA. This is Acetyl-coenzyme A carboxylase carboxyl transferase subunit alpha from Streptococcus thermophilus (strain CNRZ 1066).